Reading from the N-terminus, the 134-residue chain is D-ribose pyranase (134 aa).

H20 functions as the Proton donor in the catalytic mechanism. Substrate contacts are provided by residues D28, H101, and 123 to 125; that span reads YSN.

Belongs to the RbsD / FucU family. RbsD subfamily. As to quaternary structure, homodecamer.

It localises to the cytoplasm. The enzyme catalyses beta-D-ribopyranose = beta-D-ribofuranose. The protein operates within carbohydrate metabolism; D-ribose degradation; D-ribose 5-phosphate from beta-D-ribopyranose: step 1/2. Its function is as follows. Catalyzes the interconversion of beta-pyran and beta-furan forms of D-ribose. This chain is D-ribose pyranase, found in Pseudomonas syringae pv. syringae (strain B728a).